The primary structure comprises 290 residues: uncharacterized protein (290 aa).

2 disordered regions span residues 17 to 91 (QTIS…EKNS) and 220 to 259 (DKAS…QMPN). Residues 40–50 (NITTHLSTGNL) show a composition bias toward polar residues. Over residues 66–83 (STKKGKRVSKPGTKKKEK) the composition is skewed to basic residues. Residues 233 to 249 (EGEKDGNAEQGKQKEVQ) are compositionally biased toward basic and acidic residues.

This is an uncharacterized protein from Saccharomyces cerevisiae (strain ATCC 204508 / S288c) (Baker's yeast).